A 164-amino-acid chain; its full sequence is Ribosome maturation factor RimM (164 aa).

One can recognise a PRC barrel domain in the interval 90 to 161; sequence KGSYFIADLI…TVTIKPLEIW (72 aa).

This sequence belongs to the RimM family. Binds ribosomal protein uS19.

The protein resides in the cytoplasm. Its function is as follows. An accessory protein needed during the final step in the assembly of 30S ribosomal subunit, possibly for assembly of the head region. Essential for efficient processing of 16S rRNA. May be needed both before and after RbfA during the maturation of 16S rRNA. It has affinity for free ribosomal 30S subunits but not for 70S ribosomes. The chain is Ribosome maturation factor RimM from Clostridium botulinum (strain Hall / ATCC 3502 / NCTC 13319 / Type A).